The primary structure comprises 337 residues: Glyceraldehyde-3-phosphate dehydrogenase (337 aa).

Residues 12–13 (RI), D34, and K79 contribute to the NAD(+) site. Residues 150-152 (SCT), T181, 210-211 (TG), and R233 each bind D-glyceraldehyde 3-phosphate. C151 functions as the Nucleophile in the catalytic mechanism. N315 lines the NAD(+) pocket.

Belongs to the glyceraldehyde-3-phosphate dehydrogenase family. As to quaternary structure, homotetramer.

The protein resides in the cytoplasm. It carries out the reaction D-glyceraldehyde 3-phosphate + phosphate + NAD(+) = (2R)-3-phospho-glyceroyl phosphate + NADH + H(+). It participates in carbohydrate degradation; glycolysis; pyruvate from D-glyceraldehyde 3-phosphate: step 1/5. This Schizophyllum commune (Split gill fungus) protein is Glyceraldehyde-3-phosphate dehydrogenase (GPD).